We begin with the raw amino-acid sequence, 171 residues long: Peptide deformylase (171 aa).

Fe cation contacts are provided by Cys91 and His133. The active site involves Glu134. A Fe cation-binding site is contributed by His137.

It belongs to the polypeptide deformylase family. The cofactor is Fe(2+).

It carries out the reaction N-terminal N-formyl-L-methionyl-[peptide] + H2O = N-terminal L-methionyl-[peptide] + formate. Its function is as follows. Removes the formyl group from the N-terminal Met of newly synthesized proteins. Requires at least a dipeptide for an efficient rate of reaction. N-terminal L-methionine is a prerequisite for activity but the enzyme has broad specificity at other positions. This is Peptide deformylase from Edwardsiella ictaluri (strain 93-146).